The sequence spans 151 residues: Probable ubiquitin-conjugating enzyme E2 W-A (151 aa).

The 149-residue stretch at 3–151 (SMQKRLQKEL…TKWWYHDDTC (149 aa)) folds into the UBC core domain. The active-site Glycyl thioester intermediate is the Cys-91.

Belongs to the ubiquitin-conjugating enzyme family.

Its subcellular location is the nucleus. The catalysed reaction is S-ubiquitinyl-[E1 ubiquitin-activating enzyme]-L-cysteine + [E2 ubiquitin-conjugating enzyme]-L-cysteine = [E1 ubiquitin-activating enzyme]-L-cysteine + S-ubiquitinyl-[E2 ubiquitin-conjugating enzyme]-L-cysteine.. It carries out the reaction S-ubiquitinyl-[E1 ubiquitin-activating enzyme]-L-cysteine + [acceptor protein]-N-terminal-amino acid = [E1 ubiquitin-activating enzyme]-L-cysteine + N-terminal-ubiquitinyl-[acceptor protein].. The protein operates within protein modification; protein ubiquitination. Functionally, accepts ubiquitin from the E1 complex and catalyzes its covalent attachment to other proteins. Catalyzes monoubiquitination. Involved in degradation of misfolded chaperone substrate and DNA repair. The protein is Probable ubiquitin-conjugating enzyme E2 W-A (ube2wa) of Danio rerio (Zebrafish).